Consider the following 46-residue polypeptide: Antimicrobial peptide eNAP-2 (46 aa).

Residues 12–46 (RPGRCPTVPPGTFGHCACLCTGDASEPKGQKCCSN) enclose the WAP domain.

Its function is as follows. Has antibiotic activity against several equine uterine pathogens; S.zooepidemicus, E.coli and P.aeruginosa. Highly efficient against S.zoopedemicus. Not active against K.pneumoniae. Selectively inactivates microbial serine proteases (subtilisin A and proteinase K) without inhibiting mammalian serine proteases (human neutrophil elastase, human cathepsin G and bovine pancreatic trypsin). The protein is Antimicrobial peptide eNAP-2 of Equus caballus (Horse).